Here is a 508-residue protein sequence, read N- to C-terminus: Protein disulfide-isomerase (508 aa).

The N-terminal stretch at 1–17 is a signal peptide; it reads MLRRALLCLAVAALVRA. A Thioredoxin 1 domain is found at 18–134; sequence DAPEEEDHVL…IVNWLKKRTG (117 aa). Catalysis depends on nucleophile residues C53 and C56. C53 and C56 form a disulfide bridge. Residue K200 is modified to N6-acetyllysine. N6-succinyllysine is present on residues K222 and K271. Phosphoserine is present on S331. One can recognise a Thioredoxin 2 domain in the interval 349 to 475; sequence GKIKPHLMSQ…FKKFLESGGQ (127 aa). A Phosphoserine; by FAM20C modification is found at S357. Residues C397 and C400 each act as nucleophile in the active site. C397 and C400 are oxidised to a cystine. Position 427 is a phosphoserine (S427). The tract at residues 471–508 is disordered; the sequence is ESGGQDGAGDDDDLEDLEEAEEPDMEEDDDQKAVKDEL. Over residues 478–500 the composition is skewed to acidic residues; that stretch reads AGDDDDLEDLEEAEEPDMEEDDD. Positions 505–508 match the Prevents secretion from ER motif; that stretch reads KDEL.

It belongs to the protein disulfide isomerase family. In terms of assembly, heterodimer; heterodimerizes with the protein microsomal triglyceride transfer MTTP. Homodimer. Monomers and homotetramers may also occur. Interacts with P4HA2, forming a heterotetramer consisting of 2 alpha subunits (P4HA2) and 2 beta (P4HB), where P4HB plays the role of a structural subunit; this tetramer catalyzes the formation of 4-hydroxyproline in collagen. Also constitutes the structural subunit of the microsomal triacylglycerol transfer protein MTTP in mammalian cells. Stabilizes both enzymes and retain them in the ER without contributing to the catalytic activity. Binds UBQLN1. Interacts with ERO1B. Binds to CD4, and upon HIV-1 binding to the cell membrane, is part of a P4HB/PDI-CD4-CXCR4-gp120 complex. Interacts with ILDR2. Interacts with ERN1/IRE1A (via N-terminus); the interaction is enhanced by phosphorylation of P4HB by FAM20C in response to endoplasmic reticulum stress and results in attenuation of ERN1 activity. In terms of processing, phosphorylation of Ser-357 by FAM20C is induced by endoplasmic reticulum stress and results in a functional switch from oxidoreductase to molecular chaperone. It also promotes interaction with ERN1.

It localises to the endoplasmic reticulum. Its subcellular location is the endoplasmic reticulum lumen. It is found in the melanosome. The protein resides in the cell membrane. It catalyses the reaction Catalyzes the rearrangement of -S-S- bonds in proteins.. This multifunctional protein catalyzes the formation, breakage and rearrangement of disulfide bonds. At the cell surface, seems to act as a reductase that cleaves disulfide bonds of proteins attached to the cell. May therefore cause structural modifications of exofacial proteins. Inside the cell, seems to form/rearrange disulfide bonds of nascent proteins. At high concentrations and following phosphorylation by FAM20C, functions as a chaperone that inhibits aggregation of misfolded proteins. At low concentrations, facilitates aggregation (anti-chaperone activity). May be involved with other chaperones in the structural modification of the TG precursor in hormone biogenesis. Also acts as a structural subunit of various enzymes such as prolyl 4-hydroxylase and microsomal triacylglycerol transfer protein MTTP. Receptor for LGALS9; the interaction retains P4HB at the cell surface of Th2 T helper cells, increasing disulfide reductase activity at the plasma membrane, altering the plasma membrane redox state and enhancing cell migration. The chain is Protein disulfide-isomerase (P4HB) from Homo sapiens (Human).